Reading from the N-terminus, the 142-residue chain is LRPALQGVRASPCPKGWLDFRGNCYGYFRHELPWRKAQAWCRALRDGCHLASIHSAEEHRAIARFVSQCQRGEEEENVWIGLRQLVKLWAWSDGSKMRYSAWDDDEFTKGNYCAALEDSSGFLSWEDDSCGERNAFICKYAA.

3 disulfide bridges follow: cysteine 13–cysteine 24, cysteine 41–cysteine 138, and cysteine 113–cysteine 130. The region spanning 20-139 is the C-type lectin domain; it reads FRGNCYGYFR…CGERNAFICK (120 aa).

It is found in the secreted. It localises to the extracellular space. Its subcellular location is the extracellular matrix. The chain is Dromaiocalcin-1 from Dromaius novaehollandiae (Emu).